Reading from the N-terminus, the 642-residue chain is Threonine--tRNA ligase (642 aa).

One can recognise a TGS domain in the interval 1–61 (MPVITLPDGS…ETDAELSIIT (61 aa)). Positions 243–534 (DHRKIGKQLD…LIEEYAGRFP (292 aa)) are catalytic. Zn(2+) is bound by residues cysteine 334, histidine 385, and histidine 511.

The protein belongs to the class-II aminoacyl-tRNA synthetase family. Homodimer. Zn(2+) serves as cofactor.

The protein resides in the cytoplasm. The enzyme catalyses tRNA(Thr) + L-threonine + ATP = L-threonyl-tRNA(Thr) + AMP + diphosphate + H(+). Its function is as follows. Catalyzes the attachment of threonine to tRNA(Thr) in a two-step reaction: L-threonine is first activated by ATP to form Thr-AMP and then transferred to the acceptor end of tRNA(Thr). Also edits incorrectly charged L-seryl-tRNA(Thr). This Shewanella sp. (strain ANA-3) protein is Threonine--tRNA ligase.